Reading from the N-terminus, the 386-residue chain is 3-hydroxyisobutyryl-CoA hydrolase, mitochondrial (386 aa).

A mitochondrion-targeting transit peptide spans 1-32 (MGLQGLCRLMSRFNSYKRTNIILQHLKMSNHT). The residue at position 92 (K92) is an N6-acetyllysine; alternate. Residue K92 is modified to N6-succinyllysine; alternate. Residues E121, G146, E169, and D177 each coordinate substrate. K221 bears the N6-acetyllysine; alternate mark. K221 carries the N6-succinyllysine; alternate modification. At S234 the chain carries Phosphoserine. K250 and K257 each carry N6-succinyllysine. At K297 the chain carries N6-acetyllysine; alternate. K297 is modified (N6-succinyllysine; alternate). An N6-succinyllysine modification is found at K301. K353 carries the post-translational modification N6-acetyllysine; alternate. K353 carries the post-translational modification N6-succinyllysine; alternate. Phosphoserine is present on S356. N6-acetyllysine is present on residues K360 and K365. K377 is modified (N6-succinyllysine).

It belongs to the enoyl-CoA hydratase/isomerase family.

It localises to the mitochondrion. It carries out the reaction 3-hydroxy-2-methylpropanoyl-CoA + H2O = 3-hydroxy-2-methylpropanoate + CoA + H(+). It participates in amino-acid degradation; L-valine degradation. In terms of biological role, hydrolyzes 3-hydroxyisobutyryl-CoA (HIBYL-CoA), a saline catabolite. Has high activity toward isobutyryl-CoA. Could be an isobutyryl-CoA dehydrogenase that functions in valine catabolism. Also hydrolyzes 3-hydroxypropanoyl-CoA. The polypeptide is 3-hydroxyisobutyryl-CoA hydrolase, mitochondrial (HIBCH) (Bos taurus (Bovine)).